The primary structure comprises 553 residues: Putative transport protein PM1071 (553 aa).

The next 5 membrane-spanning stretches (helical) occupy residues 4–24 (IAIT…IGHW), 28–48 (GVGL…HFTN), 65–85 (FGLI…FFAS), 91–111 (LKLN…VIVI), and 157–177 (MAYA…MWLI). RCK C-terminal domains lie at 190–276 (KNFL…VLGE) and 277–361 (EVDV…ILGN). Transmembrane regions (helical) follow at residues 371-391 (MLPV…PFHI), 403-425 (AGGP…LYWF), 439-459 (IVLF…DTLV), 464-484 (LEWM…VGIV), 496-516 (LCGL…ANAI), and 533-553 (LVMF…WTLL).

Belongs to the AAE transporter (TC 2.A.81) family. YidE subfamily.

The protein resides in the cell membrane. The protein is Putative transport protein PM1071 of Pasteurella multocida (strain Pm70).